We begin with the raw amino-acid sequence, 404 residues long: F-box protein At2g17036 (404 aa).

An F-box domain is found at 2–50; sequence MDWATLPKDLLDLISKCLESSFDLIQFRSVCSSWRSAAGPKRLLWAHNL.

The protein is F-box protein At2g17036 of Arabidopsis thaliana (Mouse-ear cress).